Here is a 104-residue protein sequence, read N- to C-terminus: Thioredoxin (104 aa).

The Thioredoxin domain maps to 2–104 (AIVKVTDSNF…NLAEVLDKHL (103 aa)). C29 and C32 are disulfide-bonded.

It belongs to the thioredoxin family.

Functionally, component of the thioredoxin-thioredoxin reductase system. Participates in various redox reactions through the reversible oxidation of its active center dithiol to a disulfide and catalyzes dithiol-disulfide exchange reactions. This Staphylococcus haemolyticus (strain JCSC1435) protein is Thioredoxin (trxA).